Consider the following 389-residue polypeptide: 11-beta-hydroxysteroid dehydrogenase-like 5 (389 aa).

The chain crosses the membrane as a helical; Signal-anchor for type II membrane protein span at residues 11–31; it reads LVAPPATMVVMAFAWPLLSFI. NADP(+)-binding positions include 56-82 and Asp107; that span reads GASS…VARR. Ser186 lines the substrate pocket. Tyr199 (proton acceptor) is an active-site residue. NADP(+) is bound by residues 199–203 and Lys203; that span reads YSAAK. A disordered region spans residues 337 to 381; that stretch reads LMLEGGPPRVPASPPRYTASPPHYTASPPRYPASPPRYPASPPRF. Residues 365-378 are compositionally biased toward pro residues; the sequence is PRYPASPPRYPASP.

The protein belongs to the short-chain dehydrogenases/reductases (SDR) family.

The protein resides in the membrane. The polypeptide is 11-beta-hydroxysteroid dehydrogenase-like 5 (HSD5) (Arabidopsis thaliana (Mouse-ear cress)).